The chain runs to 463 residues: Alpha-L-arabinofuranosidase B (463 aa).

The first 26 residues, 1-26 (MIPQLNRNYAWAIALGLVARSSLVSA), serve as a signal peptide directing secretion. A catalytic region spans residues 27–308 (GPCDIYASGG…ILGIGGHNSK (282 aa)). An intrachain disulfide couples cysteine 29 to cysteine 39. N-linked (GlcNAc...) asparagine glycosylation occurs at asparagine 81. 2 disulfides stabilise this stretch: cysteine 89–cysteine 94 and cysteine 184–cysteine 185. Aspartate 227 provides a ligand contact to substrate. Glutamate 229 acts as the Nucleophile in catalysis. A substrate-binding site is contributed by asparagine 230. N-linked (GlcNAc...) asparagine glycosylation is present at asparagine 280. Residue glycine 304 coordinates substrate. The segment at 309 to 463 (LTVGSSISLR…VSWVVSASFA (155 aa)) is ABD. Residue asparagine 332 is glycosylated (N-linked (GlcNAc...) asparagine). Residues cysteine 366 and cysteine 404 are joined by a disulfide bond. Substrate is bound by residues histidine 381, asparagine 383, phenylalanine 384, histidine 428, aspartate 430, leucine 433, and aspartate 453.

This sequence belongs to the glycosyl hydrolase 54 family. In terms of processing, residue Asn-280 is mannosylated with up to 7 mannose residues.

The protein resides in the secreted. The enzyme catalyses Hydrolysis of terminal non-reducing alpha-L-arabinofuranoside residues in alpha-L-arabinosides.. Its pathway is glycan metabolism; L-arabinan degradation. Functionally, secreted alpha-L-arabinofuranosidase that actively hydrolyzes p-NP-alpha-L-arabinofuranoside and is specific for furanose configuration of the carbohydrate ring. Also exhibits significant activity against polymeric arabinose-containing substrates such as arabinan and arabinoxylan, a major component of plant hemicellulose. This is Alpha-L-arabinofuranosidase B (abfB) from Penicillium canescens.